The chain runs to 501 residues: NAD(P)H-quinone oxidoreductase subunit 2, chloroplastic (501 aa).

14 helical membrane passes run 15-35, 42-62, 82-102, 107-127, 132-152, 167-187, 210-230, 244-264, 278-298, 307-327, 334-354, 378-398, 410-430, and 466-486; these read ILPE…DLIL, VFFF…IFQL, IFRI…IDFI, LAIT…MFLC, LITI…LSGY, LLIG…LYGL, FGSL…LSLV, PTPV…ALLV, WHSL…LVAI, LAYS…TGNF, IVYL…IILF, FSLA…GFFG, GLYF…YYYL, and VSII…NPII.

It belongs to the complex I subunit 2 family. As to quaternary structure, NDH is composed of at least 16 different subunits, 5 of which are encoded in the nucleus.

The protein resides in the plastid. It localises to the chloroplast thylakoid membrane. The catalysed reaction is a plastoquinone + NADH + (n+1) H(+)(in) = a plastoquinol + NAD(+) + n H(+)(out). It carries out the reaction a plastoquinone + NADPH + (n+1) H(+)(in) = a plastoquinol + NADP(+) + n H(+)(out). NDH shuttles electrons from NAD(P)H:plastoquinone, via FMN and iron-sulfur (Fe-S) centers, to quinones in the photosynthetic chain and possibly in a chloroplast respiratory chain. The immediate electron acceptor for the enzyme in this species is believed to be plastoquinone. Couples the redox reaction to proton translocation, and thus conserves the redox energy in a proton gradient. This Physcomitrium patens (Spreading-leaved earth moss) protein is NAD(P)H-quinone oxidoreductase subunit 2, chloroplastic.